Here is a 275-residue protein sequence, read N- to C-terminus: Phosphonoacetaldehyde hydrolase (275 aa).

Asp15 serves as the catalytic Nucleophile. 2 residues coordinate Mg(2+): Asp15 and Ala17. Lys56 serves as the catalytic Schiff-base intermediate with substrate. Mg(2+) is bound at residue Asp189.

Belongs to the HAD-like hydrolase superfamily. PhnX family. Homodimer. Mg(2+) serves as cofactor.

The catalysed reaction is phosphonoacetaldehyde + H2O = acetaldehyde + phosphate + H(+). Involved in phosphonate degradation. The protein is Phosphonoacetaldehyde hydrolase of Pseudomonas fluorescens (strain Pf0-1).